A 368-amino-acid chain; its full sequence is Phosphoribosylformylglycinamidine cyclo-ligase (368 aa).

The protein belongs to the AIR synthase family.

It is found in the cytoplasm. It carries out the reaction 2-formamido-N(1)-(5-O-phospho-beta-D-ribosyl)acetamidine + ATP = 5-amino-1-(5-phospho-beta-D-ribosyl)imidazole + ADP + phosphate + H(+). It participates in purine metabolism; IMP biosynthesis via de novo pathway; 5-amino-1-(5-phospho-D-ribosyl)imidazole from N(2)-formyl-N(1)-(5-phospho-D-ribosyl)glycinamide: step 2/2. The chain is Phosphoribosylformylglycinamidine cyclo-ligase from Novosphingobium aromaticivorans (strain ATCC 700278 / DSM 12444 / CCUG 56034 / CIP 105152 / NBRC 16084 / F199).